We begin with the raw amino-acid sequence, 476 residues long: Cobyric acid synthase (476 aa).

Residues 242–428 (AFRVVVPVPP…LHGLFDTPDA (187 aa)) enclose the GATase cobBQ-type domain. Residue Cys-323 is the Nucleophile of the active site. The active site involves His-420.

Belongs to the CobB/CobQ family. CobQ subfamily.

Its pathway is cofactor biosynthesis; adenosylcobalamin biosynthesis. In terms of biological role, catalyzes amidations at positions B, D, E, and G on adenosylcobyrinic A,C-diamide. NH(2) groups are provided by glutamine, and one molecule of ATP is hydrogenolyzed for each amidation. The polypeptide is Cobyric acid synthase (Janthinobacterium sp. (strain Marseille) (Minibacterium massiliensis)).